The primary structure comprises 344 residues: N-acetyl-gamma-glutamyl-phosphate reductase (344 aa).

Cysteine 148 is an active-site residue.

Belongs to the NAGSA dehydrogenase family. Type 1 subfamily.

The protein resides in the cytoplasm. It catalyses the reaction N-acetyl-L-glutamate 5-semialdehyde + phosphate + NADP(+) = N-acetyl-L-glutamyl 5-phosphate + NADPH + H(+). It participates in amino-acid biosynthesis; L-arginine biosynthesis; N(2)-acetyl-L-ornithine from L-glutamate: step 3/4. Catalyzes the NADPH-dependent reduction of N-acetyl-5-glutamyl phosphate to yield N-acetyl-L-glutamate 5-semialdehyde. This is N-acetyl-gamma-glutamyl-phosphate reductase from Clostridium botulinum (strain Alaska E43 / Type E3).